The sequence spans 323 residues: Elongation factor P--(R)-beta-lysine ligase (323 aa).

76-78 (SPE) lines the substrate pocket. Residues 100–102 (RNE) and Asn109 each bind ATP. Tyr118 contacts substrate. ATP is bound at residue 242–243 (EL). Glu249 is a substrate binding site. Gly298 serves as a coordination point for ATP.

Belongs to the class-II aminoacyl-tRNA synthetase family. EpmA subfamily. Homodimer.

The enzyme catalyses D-beta-lysine + L-lysyl-[protein] + ATP = N(6)-((3R)-3,6-diaminohexanoyl)-L-lysyl-[protein] + AMP + diphosphate + H(+). In terms of biological role, with EpmB is involved in the beta-lysylation step of the post-translational modification of translation elongation factor P (EF-P). Catalyzes the ATP-dependent activation of (R)-beta-lysine produced by EpmB, forming a lysyl-adenylate, from which the beta-lysyl moiety is then transferred to the epsilon-amino group of a conserved specific lysine residue in EF-P. The polypeptide is Elongation factor P--(R)-beta-lysine ligase (Actinobacillus succinogenes (strain ATCC 55618 / DSM 22257 / CCUG 43843 / 130Z)).